A 552-amino-acid chain; its full sequence is U3 small nucleolar RNA-associated protein 18 homolog (552 aa).

Disordered regions lie at residues 1-81 and 104-143; these read MPPE…KPAA and LRSS…EDDE. The span at 43 to 58 shows a compositional bias: low complexity; that stretch reads PAEPRAAPSAGSAAAA. Positions 72 to 81 are enriched in basic and acidic residues; sequence LTLEDDKPAA. Lys-78 participates in a covalent cross-link: Glycyl lysine isopeptide (Lys-Gly) (interchain with G-Cter in SUMO2). Residues Ser-114, Ser-115, and Ser-118 each carry the phosphoserine modification. Residues Lys-178 and Lys-197 each participate in a glycyl lysine isopeptide (Lys-Gly) (interchain with G-Cter in SUMO2) cross-link. The segment at 183 to 214 is disordered; the sequence is HAMGGVPDWAEAGSKRRTSSDDESEEDEDDLL. Thr-200 is modified (phosphothreonine). 3 positions are modified to phosphoserine: Ser-201, Ser-202, and Ser-206. Over residues 203 to 212 the composition is skewed to acidic residues; sequence DDESEEDEDD. Residue Thr-217 is modified to Phosphothreonine. WD repeat units follow at residues 245 to 284, 289 to 329, 376 to 415, 417 to 458, and 467 to 508; these read PTTA…NPKI, LEKF…LIPV, KING…CMNR, LDEG…QQTN, and NLVT…VFSN. Lys-513 participates in a covalent cross-link: Glycyl lysine isopeptide (Lys-Gly) (interchain with G-Cter in SUMO2). A WD 6 repeat occupies 515 to 551; that stretch reads STLSRVQTMDFSPRGGYFALGNEKGRALMYRLHHYSD.

The protein belongs to the WD repeat UTP18 family. As to quaternary structure, part of the small subunit (SSU) processome, composed of more than 70 proteins and the RNA chaperone small nucleolar RNA (snoRNA) U3.

Its subcellular location is the nucleus. The protein resides in the nucleolus. Part of the small subunit (SSU) processome, first precursor of the small eukaryotic ribosomal subunit. During the assembly of the SSU processome in the nucleolus, many ribosome biogenesis factors, an RNA chaperone and ribosomal proteins associate with the nascent pre-rRNA and work in concert to generate RNA folding, modifications, rearrangements and cleavage as well as targeted degradation of pre-ribosomal RNA by the RNA exosome. Involved in nucleolar processing of pre-18S ribosomal RNA. The protein is U3 small nucleolar RNA-associated protein 18 homolog (Utp18) of Mus musculus (Mouse).